We begin with the raw amino-acid sequence, 362 residues long: MASASRQILRAASRASTRTAFAPAASRGLAARTIAGRRFYSSSSEPAKASSSNLGWIAGALAAAAAGAGYWYTQNGGAATLTKPEFKDYQTVYNDIASRLEENPDYDDGSYGPVLVRLAWHASGTYDKETGTGGSNGATMRFSPEGGHGANAGLKAARDFLEPIKAKYPWITYSDLWILGGVCAIQEMLGPKIPYRPGRSDKDAAACTPDGRLPDAAQRQDHVRNIFYRMGFNDQEIVALAGAHALGRCHTDRSGFDGPWTFSPTVLTNDYFKLLLNEKWEYKKWDGPKQYVDSKTKSLMMLPADMCLIEDKKFKEWTKKYADDNDLFFKDFSAAVLKLFELGVPFAEGTENQRWIFKPTSE.

The transit peptide at 1–40 (MASASRQILRAASRASTRTAFAPAASRGLAARTIAGRRFY) directs the protein to the mitochondrion. The Proton acceptor role is filled by His-121. A heme b-binding site is contributed by His-244. The Tryptophan radical intermediate role is filled by Trp-260.

The protein belongs to the peroxidase family. Cytochrome c peroxidase subfamily. Forms a one-to-one complex with cytochrome c. The cofactor is heme b.

It localises to the mitochondrion matrix. It is found in the mitochondrion intermembrane space. The catalysed reaction is 2 Fe(II)-[cytochrome c] + H2O2 + 2 H(+) = 2 Fe(III)-[cytochrome c] + 2 H2O. Its function is as follows. Destroys radicals which are normally produced within the cells and which are toxic to biological systems. The chain is Cytochrome c peroxidase, mitochondrial (CCP1) from Pyricularia oryzae (strain 70-15 / ATCC MYA-4617 / FGSC 8958) (Rice blast fungus).